Consider the following 636-residue polypeptide: p-hydroxybenzoate-m-hydroxylase A (636 aa).

FAD contacts are provided by residues D10–N39, R241–Y243, Y289, and D310. Residues I11–S28 form a helical membrane-spanning segment.

The protein belongs to the PheA/TfdB FAD monooxygenase family. Requires FAD as cofactor.

The protein resides in the membrane. It carries out the reaction 4-hydroxybenzoate + NADH + O2 + H(+) = 3,4-dihydroxybenzoate + NAD(+) + H2O. The enzyme catalyses 4-hydroxybenzoate + NADPH + O2 + H(+) = 3,4-dihydroxybenzoate + NADP(+) + H2O. Its function is as follows. FAD-dependent monooxygenase; part of the benzoic acid degradation pathway also known as the protocatechuic acid pathway. Benzoic acid debradation begins with the conversion of benzoic acid into 4-hydroxybenzoic acid through hydroxylation by the benzoate-4-monooxygenase bphA, and its partner NADPH-cytochrome P450 reductase cprA which act as a mediator in electron donation from NADPH. 4-Hydroxybenzoic acid is then converted into 3,4-dihydroxybenzoic acid (also called protocatechuic acid) by the p-hydroxybenzoate-m-hydroxylase phhA. Protocatechuic acid is converted into 3-carboxy-cis,cis-muconic acid by the intradiol ring-cleavage dioxygenase prcA, which is further metabolized through the 3-oxoadipate pathway to finally enter the tricarboxylic acid cycle (TCA). The chain is p-hydroxybenzoate-m-hydroxylase A from Aspergillus niger (strain ATCC MYA-4892 / CBS 513.88 / FGSC A1513).